A 141-amino-acid polypeptide reads, in one-letter code: Endoribonuclease YbeY (141 aa).

The Zn(2+) site is built by His-107, His-111, and His-117.

Belongs to the endoribonuclease YbeY family. It depends on Zn(2+) as a cofactor.

The protein localises to the cytoplasm. Its function is as follows. Single strand-specific metallo-endoribonuclease involved in late-stage 70S ribosome quality control and in maturation of the 3' terminus of the 16S rRNA. This Leptospira interrogans serogroup Icterohaemorrhagiae serovar Lai (strain 56601) protein is Endoribonuclease YbeY.